The following is a 284-amino-acid chain: Tropomyosin alpha-1 chain (284 aa).

The interval 1–38 (MDAIKKKMQMLKLDKENALDRAEQAEADKKGAEDKSKQ) is disordered. The stretch at 1-284 (MDAIKKKMQM…DHALNDMTSI (284 aa)) forms a coiled coil. Basic and acidic residues predominate over residues 12-38 (KLDKENALDRAEQAEADKKGAEDKSKQ).

The protein belongs to the tropomyosin family. In terms of assembly, homodimer. Heterodimer of an alpha (TPM1, TPM3 or TPM4) and a beta (TPM2) chain.

The protein localises to the cytoplasm. The protein resides in the cytoskeleton. In terms of biological role, binds to actin filaments in muscle and non-muscle cells. Plays a central role, in association with the troponin complex, in the calcium dependent regulation of vertebrate striated muscle contraction. Smooth muscle contraction is regulated by interaction with caldesmon. In non-muscle cells is implicated in stabilizing cytoskeleton actin filaments. The protein is Tropomyosin alpha-1 chain (tpm1) of Xenopus laevis (African clawed frog).